The sequence spans 349 residues: UDP-glucose 4-epimerase (349 aa).

Residues 10–12 (GFI), 31–35 (DNFAN), 66–67 (DV), and Lys-92 each bind NAD(+). 132–134 (SAT) is a substrate binding site. Tyr-158 functions as the Proton acceptor in the catalytic mechanism. 2 residues coordinate NAD(+): Lys-162 and Tyr-186. Substrate-binding positions include 186-188 (YFN), 207-209 (NNL), 225-227 (TIY), Arg-240, and 303-306 (RPGD).

The protein belongs to the NAD(P)-dependent epimerase/dehydratase family. NAD(+) serves as cofactor. In terms of tissue distribution, expressed in gonads, vulva, intestine, hypdermis and nervous system.

It carries out the reaction UDP-alpha-D-glucose = UDP-alpha-D-galactose. The catalysed reaction is UDP-N-acetyl-alpha-D-glucosamine = UDP-N-acetyl-alpha-D-galactosamine. It participates in carbohydrate metabolism; galactose metabolism. In terms of biological role, catalyzes two distinct but analogous reactions: the reversible epimerization of UDP-glucose to UDP-galactose and the reversible epimerization of UDP-N-acetylglucosamine to UDP-N-acetylgalactosamine. The reaction with UDP-Gal plays a critical role in the Leloir pathway of galactose catabolism in which galactose is converted to the glycolytic intermediate glucose 6-phosphate. It contributes to the catabolism of dietary galactose and enables the endogenous biosynthesis of both UDP-Gal and UDP-GalNAc when exogenous sources are limited. Both UDP-sugar interconversions are important for the synthesis of glycoproteins and glycolipids. The protein is UDP-glucose 4-epimerase of Caenorhabditis elegans.